The primary structure comprises 271 residues: Phosphatidylglycerol--prolipoprotein diacylglyceryl transferase (271 aa).

The next 7 helical transmembrane spans lie at 25–45, 60–80, 103–123, 134–154, 181–201, 209–229, and 235–255; these read WYGI…KFFV, YFIW…ILIY, FVGI…IATL, WIFL…GRIG, PSQL…VYLA, GELI…CEFY, and GIGF…IMFI. Arg-152 contacts a 1,2-diacyl-sn-glycero-3-phospho-(1'-sn-glycerol).

The protein belongs to the Lgt family.

Its subcellular location is the cell inner membrane. The enzyme catalyses L-cysteinyl-[prolipoprotein] + a 1,2-diacyl-sn-glycero-3-phospho-(1'-sn-glycerol) = an S-1,2-diacyl-sn-glyceryl-L-cysteinyl-[prolipoprotein] + sn-glycerol 1-phosphate + H(+). It functions in the pathway protein modification; lipoprotein biosynthesis (diacylglyceryl transfer). Its function is as follows. Catalyzes the transfer of the diacylglyceryl group from phosphatidylglycerol to the sulfhydryl group of the N-terminal cysteine of a prolipoprotein, the first step in the formation of mature lipoproteins. The chain is Phosphatidylglycerol--prolipoprotein diacylglyceryl transferase from Campylobacter jejuni subsp. jejuni serotype O:6 (strain 81116 / NCTC 11828).